The sequence spans 212 residues: Probable GTP-binding protein EngB (212 aa).

Residues serine 38–phenylalanine 210 enclose the EngB-type G domain. Residues glycine 46–serine 53, glycine 73–glutamine 77, aspartate 91–glycine 94, threonine 158–aspartate 161, and valine 189–asparagine 191 each bind GTP. Residues serine 53 and threonine 75 each contribute to the Mg(2+) site.

It belongs to the TRAFAC class TrmE-Era-EngA-EngB-Septin-like GTPase superfamily. EngB GTPase family. Mg(2+) serves as cofactor.

Necessary for normal cell division and for the maintenance of normal septation. This is Probable GTP-binding protein EngB from Rickettsia rickettsii (strain Sheila Smith).